A 917-amino-acid polypeptide reads, in one-letter code: Auxin response factor 17 (917 aa).

The segment at residues 134-236 is a DNA-binding region (TF-B3); it reads FCKTLTASDT…QLLLGIRRAN (103 aa). The interval 571–649 is disordered; the sequence is SVPNALSPFS…RPTAVPVPDP (79 aa). 2 stretches are compositionally biased toward low complexity: residues 576-594 and 604-620; these read LSPFSQLSSPSQSSPMTLQ and SYPDTSMSSLSPSNTST. A PB1 domain is found at 786–870; sequence ATFVKVYKSG…SCIKILSPQE (85 aa).

The protein belongs to the ARF family. Homodimers and heterodimers. As to expression, expressed in roots, culms, leaves and young panicles.

The protein resides in the nucleus. Its function is as follows. Auxin response factors (ARFs) are transcriptional factors that bind specifically to the DNA sequence 5'-TGTCTC-3' found in the auxin-responsive promoter elements (AuxREs). This chain is Auxin response factor 17 (ARF17), found in Oryza sativa subsp. japonica (Rice).